The primary structure comprises 297 residues: Tyrosine recombinase XerD (297 aa).

The Core-binding (CB) domain occupies 1 to 86 (MNDLIDDFLH…SLRSFFHYLM (86 aa)). Residues 107–291 (SLPKVLNLDD…TKLRLKDVYK (185 aa)) enclose the Tyr recombinase domain. Active-site residues include R147, K171, H243, R246, and H269. Catalysis depends on Y278, which acts as the O-(3'-phospho-DNA)-tyrosine intermediate.

It belongs to the 'phage' integrase family. XerD subfamily. In terms of assembly, forms a cyclic heterotetrameric complex composed of two molecules of XerC and two molecules of XerD.

It is found in the cytoplasm. Functionally, site-specific tyrosine recombinase, which acts by catalyzing the cutting and rejoining of the recombining DNA molecules. The XerC-XerD complex is essential to convert dimers of the bacterial chromosome into monomers to permit their segregation at cell division. It also contributes to the segregational stability of plasmids. This Listeria innocua serovar 6a (strain ATCC BAA-680 / CLIP 11262) protein is Tyrosine recombinase XerD.